The primary structure comprises 229 residues: Endonuclease V (229 aa).

It belongs to the endonuclease V family.

The protein resides in the cytoplasm. It catalyses the reaction Endonucleolytic cleavage at apurinic or apyrimidinic sites to products with a 5'-phosphate.. In terms of biological role, DNA repair enzyme involved in the repair of deaminated bases. Selectively cleaves double-stranded DNA at the second phosphodiester bond 3' to a deoxyinosine leaving behind the intact lesion on the nicked DNA. The chain is Endonuclease V from Methanopyrus kandleri (strain AV19 / DSM 6324 / JCM 9639 / NBRC 100938).